A 194-amino-acid chain; its full sequence is Oligoribonuclease (194 aa).

The 164-residue stretch at 11–174 folds into the Exonuclease domain; sequence LIWIDLEMTG…SDVRDSIDEL (164 aa). Residue Y132 is part of the active site.

It belongs to the oligoribonuclease family.

It localises to the cytoplasm. Functionally, 3'-to-5' exoribonuclease specific for small oligoribonucleotides. The protein is Oligoribonuclease of Xanthomonas campestris pv. campestris (strain ATCC 33913 / DSM 3586 / NCPPB 528 / LMG 568 / P 25).